The primary structure comprises 196 residues: Peptidyl-tRNA hydrolase (196 aa).

H15 contacts tRNA. Catalysis depends on H20, which acts as the Proton acceptor. Y66, N68, and N114 together coordinate tRNA.

Belongs to the PTH family. As to quaternary structure, monomer.

The protein localises to the cytoplasm. It catalyses the reaction an N-acyl-L-alpha-aminoacyl-tRNA + H2O = an N-acyl-L-amino acid + a tRNA + H(+). Functionally, hydrolyzes ribosome-free peptidyl-tRNAs (with 1 or more amino acids incorporated), which drop off the ribosome during protein synthesis, or as a result of ribosome stalling. Catalyzes the release of premature peptidyl moieties from peptidyl-tRNA molecules trapped in stalled 50S ribosomal subunits, and thus maintains levels of free tRNAs and 50S ribosomes. The protein is Peptidyl-tRNA hydrolase of Polynucleobacter necessarius subsp. necessarius (strain STIR1).